A 120-amino-acid polypeptide reads, in one-letter code: Ribosome-binding factor A (120 aa).

The protein belongs to the RbfA family. In terms of assembly, monomer. Binds 30S ribosomal subunits, but not 50S ribosomal subunits or 70S ribosomes.

It localises to the cytoplasm. Its function is as follows. One of several proteins that assist in the late maturation steps of the functional core of the 30S ribosomal subunit. Associates with free 30S ribosomal subunits (but not with 30S subunits that are part of 70S ribosomes or polysomes). Required for efficient processing of 16S rRNA. May interact with the 5'-terminal helix region of 16S rRNA. The sequence is that of Ribosome-binding factor A from Borreliella burgdorferi (strain ATCC 35210 / DSM 4680 / CIP 102532 / B31) (Borrelia burgdorferi).